We begin with the raw amino-acid sequence, 222 residues long: Protein CicA (222 aa).

The chain is Protein CicA (cicA) from Caulobacter vibrioides (strain ATCC 19089 / CIP 103742 / CB 15) (Caulobacter crescentus).